The following is a 53-amino-acid chain: Lantibiotic mutacin-2 (53 aa).

The propeptide occupies 1-26 (MNKLNSNAVVSLNEVSDSELDTILGG). The segment at residues 36–41 (TVSYEC) is a cross-link (beta-methyllanthionine (Thr-Cys)). 2 consecutive cross-links (lanthionine (Ser-Cys)) follow at residues 38-52 (SYECRMNSWQHVFTC) and 45-53 (SWQHVFTCC). Threonine 51 carries the 2,3-didehydrobutyrine modification.

Maturation of lantibiotics involves the enzymatic conversion of Thr, and Ser into dehydrated AA and the formation of thioether bonds with cysteine. This is followed by membrane translocation and cleavage of the modified precursor. Post-translationally, it is not established whether the 2,3-didehydrobutyrine is the E- or Z-isomer.

Its function is as follows. Lanthionine-containing peptide antibiotic (lantibiotic) active on Gram-positive bacteria including M.luteus, S.aureus, Streptococcus, P.micros, P.acidilactici, C.sporogenes, C.diphtheriae, A.viscosus, G.vaginalis, P.acnes, L.monocytogenes and M.smegmatis, and Gram-negative bacteria including C.jejuni, H.pylori and N.gonorrhoeae. Transiently and partially depolarizes the transmembrane electrical potential and pH gradient of susceptible cells, inhibits the uptake of amino acids and depletes the intracellular ATP pool. The sequence is that of Lantibiotic mutacin-2 from Streptococcus mutans.